The primary structure comprises 429 residues: Proton/sodium-glutamate symport protein (429 aa).

Topologically, residues 1-5 are cytoplasmic; sequence MKRIK. Residues 6–26 traverse the membrane as a helical segment; it reads FGLATQIFVGLILGVIVGVIW. Over 27–45 the chain is Extracellular; sequence YGNPALPTYLQPIGDLFLR. Residues 46-66 form a helical membrane-spanning segment; the sequence is LIKMIVIPIVVSSLIIGVAGA. Residues 67-79 are Cytoplasmic-facing; the sequence is GNGKQVGKLGFRT. Residues 80-100 form a helical membrane-spanning segment; that stretch reads ILYFEIITTFAIILGLALANI. Residues 101 to 150 are Extracellular-facing; the sequence is FHPGTGVNIHEAQKSDISQYVETEKEQSNKSVAETFLHIVPTNFFQSLVE. A helical transmembrane segment spans residues 151 to 171; that stretch reads GDLLAIICFTVLFALGISAIG. The Cytoplasmic segment spans residues 172 to 190; it reads ERGKPVLAFFEGVSHAMFH. A helical transmembrane segment spans residues 191–211; the sequence is VVNLVMKVAPFGVFALIGVTV. At 212–224 the chain is on the extracellular side; that stretch reads SKFGLGSLISLGK. A helical transmembrane segment spans residues 225-245; that stretch reads LVGLVYVALAFFLIVIFGIVA. Position 246 (Lys246) is a topological domain, cytoplasmic. Residues 247 to 267 form a helical membrane-spanning segment; that stretch reads IAGISIFKFLAYMKDEILLAF. Residues 268-290 lie on the Extracellular side of the membrane; the sequence is STSSSETVLPRIMEKMEKIGCPK. A helical membrane pass occupies residues 291–311; the sequence is GIVSFVIPIGYTFNLDGSVLY. The Cytoplasmic segment spans residues 312–321; that stretch reads QSIAALFLAQ. The chain crosses the membrane as a helical span at residues 322–342; that stretch reads VYGIDLTIWHQITLVLVLMVT. The Extracellular portion of the chain corresponds to 343 to 353; sequence SKGMAAVPGTS. The helical transmembrane segment at 354 to 374 threads the bilayer; the sequence is FVVLLATLGTIGVPAEGLAFI. Over 375 to 429 the chain is Cytoplasmic; it reads AGVDRIMDMARTVVNLTGNALAAVVMSKWEGMFNPAKAETVMSQSKTEQNATISG.

This sequence belongs to the dicarboxylate/amino acid:cation symporter (DAACS) (TC 2.A.23) family. As to quaternary structure, homotrimer. Interacts with FloT.

The protein resides in the cell membrane. It localises to the membrane raft. Functionally, this carrier protein is part of the Na(+)-dependent, binding-protein-independent glutamate-aspartate transport system. The chain is Proton/sodium-glutamate symport protein (gltT) from Bacillus subtilis (strain 168).